The sequence spans 371 residues: Aminomethyltransferase (371 aa).

It belongs to the GcvT family. The glycine cleavage system is composed of four proteins: P, T, L and H.

The enzyme catalyses N(6)-[(R)-S(8)-aminomethyldihydrolipoyl]-L-lysyl-[protein] + (6S)-5,6,7,8-tetrahydrofolate = N(6)-[(R)-dihydrolipoyl]-L-lysyl-[protein] + (6R)-5,10-methylene-5,6,7,8-tetrahydrofolate + NH4(+). The glycine cleavage system catalyzes the degradation of glycine. The sequence is that of Aminomethyltransferase from Pectobacterium carotovorum subsp. carotovorum (strain PC1).